The primary structure comprises 376 residues: Cyclic GMP-AMP synthase-like receptor 1 (376 aa).

Mg(2+)-binding residues include E77 and D79.

Belongs to the mab-21 family. Mg(2+) serves as cofactor. It depends on Mn(2+) as a cofactor.

The catalysed reaction is UTP + ATP = 3',3'-cUAMP + 2 diphosphate. Nucleotidyltransferase that catalyzes the formation of cyclic UMP-AMP (3',3'-cUAMP) from ATP and UTP and plays a key role in innate immunity. Acts as a key sensor of double-stranded RNA (dsRNA), the presence of dsRNA in the cytoplasm being a danger signal that triggers the immune responses. Directly binds dsRNA, activating the nucleotidyltransferase activity, leading to synthesis of 3',3'-cUAMP, a second messenger that binds to and activates Sting, thereby triggering the immune response via activation of the NF-kappa-B transcription factor. In Stylophora pistillata (Smooth cauliflower coral), this protein is Cyclic GMP-AMP synthase-like receptor 1.